We begin with the raw amino-acid sequence, 345 residues long: Isocitrate lyase (345 aa).

58–60 (SGY) contacts substrate. Aspartate 98 contributes to the Mg(2+) binding site. The active-site Proton acceptor is cysteine 135. Substrate is bound by residues 136–137 (GH), arginine 170, 230–234 (NYSSS), and threonine 260. The interval 318–345 (DPEARRRIEESEGFSEEQADPITSNDDD) is disordered. Over residues 328–345 (SEGFSEEQADPITSNDDD) the composition is skewed to acidic residues.

Homotetramer or homotrimer. Requires Mg(2+) as cofactor.

It carries out the reaction D-threo-isocitrate = glyoxylate + succinate. Its pathway is carbohydrate metabolism; glyoxylate cycle; (S)-malate from isocitrate: step 1/2. Involved in the metabolic adaptation in response to environmental changes. Catalyzes the reversible formation of succinate and glyoxylate from isocitrate, a key step of the glyoxylate cycle, which operates as an anaplerotic route for replenishing the tricarboxylic acid cycle during growth on fatty acid substrates. In Haloferax volcanii (strain ATCC 29605 / DSM 3757 / JCM 8879 / NBRC 14742 / NCIMB 2012 / VKM B-1768 / DS2) (Halobacterium volcanii), this protein is Isocitrate lyase (aceA).